We begin with the raw amino-acid sequence, 226 residues long: Endonuclease NucS (226 aa).

It belongs to the NucS endonuclease family.

It is found in the cytoplasm. In terms of biological role, cleaves both 3' and 5' ssDNA extremities of branched DNA structures. This is Endonuclease NucS from Mycobacterium ulcerans (strain Agy99).